A 286-amino-acid polypeptide reads, in one-letter code: MQAFFRKPKKFVTLTSKEQRVDVPVGLMTKCPKCKLIQYTKQLEANLKVCVCGYHHPLTATERFEQLFDAGTITYFDLPAVKADPLDFQDYPEKLKGDQVRTGLEEAIVCGVGQVNGYPLVACVMDARFRMGSMGAAVGAAISEAIRYATKERLPVTIFSASGGARMQEGMVSLMQMAKSSLFLKQHSDAGLLYVSCMTHPTTGGVSASFAMLGDFNIAEPGALIGFAGRRIIEQTIREKLPEDFQTSEFLLQAGQLDDVVSRHDLKTYYTRILMMHSEETNHATI.

In terms of domain architecture, CoA carboxyltransferase N-terminal spans 27–286 (LMTKCPKCKL…HSEETNHATI (260 aa)). Cysteine 31, cysteine 34, cysteine 50, and cysteine 52 together coordinate Zn(2+). A C4-type zinc finger spans residues 31-52 (CPKCKLIQYTKQLEANLKVCVC).

The protein belongs to the AccD/PCCB family. In terms of assembly, acetyl-CoA carboxylase is a heterohexamer composed of biotin carboxyl carrier protein (AccB), biotin carboxylase (AccC) and two subunits each of ACCase subunit alpha (AccA) and ACCase subunit beta (AccD). Requires Zn(2+) as cofactor.

The protein localises to the cytoplasm. It carries out the reaction N(6)-carboxybiotinyl-L-lysyl-[protein] + acetyl-CoA = N(6)-biotinyl-L-lysyl-[protein] + malonyl-CoA. It participates in lipid metabolism; malonyl-CoA biosynthesis; malonyl-CoA from acetyl-CoA: step 1/1. Component of the acetyl coenzyme A carboxylase (ACC) complex. Biotin carboxylase (BC) catalyzes the carboxylation of biotin on its carrier protein (BCCP) and then the CO(2) group is transferred by the transcarboxylase to acetyl-CoA to form malonyl-CoA. The sequence is that of Acetyl-coenzyme A carboxylase carboxyl transferase subunit beta from Exiguobacterium sibiricum (strain DSM 17290 / CCUG 55495 / CIP 109462 / JCM 13490 / 255-15).